The chain runs to 305 residues: Virulence plasmid integrase pGP7-D (305 aa).

The region spanning 13–99 is the Core-binding (CB) domain; the sequence is LTFGDASEIW…CYISFTKFLY (87 aa). The Tyr recombinase domain occupies 127 to 305; it reads IKTESISKQE…SPLVQTPPIL (179 aa). Residues Lys188 and Arg257 contribute to the active site. Tyr289 acts as the O-(3'-phospho-DNA)-tyrosine intermediate in catalysis.

Belongs to the 'phage' integrase family.

The protein is Virulence plasmid integrase pGP7-D of Chlamydia trachomatis serovar L2 (strain ATCC VR-902B / DSM 19102 / 434/Bu).